The chain runs to 110 residues: Flagellar hook-basal body complex protein FliE (110 aa).

It belongs to the FliE family.

The protein resides in the bacterial flagellum basal body. The sequence is that of Flagellar hook-basal body complex protein FliE from Ralstonia nicotianae (strain ATCC BAA-1114 / GMI1000) (Ralstonia solanacearum).